The primary structure comprises 418 residues: Gamma-glutamyl phosphate reductase (418 aa).

The protein belongs to the gamma-glutamyl phosphate reductase family.

The protein resides in the cytoplasm. The enzyme catalyses L-glutamate 5-semialdehyde + phosphate + NADP(+) = L-glutamyl 5-phosphate + NADPH + H(+). It functions in the pathway amino-acid biosynthesis; L-proline biosynthesis; L-glutamate 5-semialdehyde from L-glutamate: step 2/2. Functionally, catalyzes the NADPH-dependent reduction of L-glutamate 5-phosphate into L-glutamate 5-semialdehyde and phosphate. The product spontaneously undergoes cyclization to form 1-pyrroline-5-carboxylate. The protein is Gamma-glutamyl phosphate reductase of Lacticaseibacillus paracasei (strain ATCC 334 / BCRC 17002 / CCUG 31169 / CIP 107868 / KCTC 3260 / NRRL B-441) (Lactobacillus paracasei).